The sequence spans 277 residues: Phosphate import ATP-binding protein PstB (277 aa).

Residues 31–272 form the ABC transporter domain; the sequence is LEVPGLNLFY…PAKKQTEDYI (242 aa). 63–70 serves as a coordination point for ATP; sequence GPSGCGKS.

It belongs to the ABC transporter superfamily. Phosphate importer (TC 3.A.1.7) family. In terms of assembly, the complex is composed of two ATP-binding proteins (PstB), two transmembrane proteins (PstC and PstA) (Potential). PstS is missing in this species.

It is found in the cell inner membrane. It catalyses the reaction phosphate(out) + ATP + H2O = ADP + 2 phosphate(in) + H(+). Part of the ABC transporter complex PstSACB involved in phosphate import. Responsible for energy coupling to the transport system. In Pseudomonas aeruginosa (strain ATCC 15692 / DSM 22644 / CIP 104116 / JCM 14847 / LMG 12228 / 1C / PRS 101 / PAO1), this protein is Phosphate import ATP-binding protein PstB.